Here is a 385-residue protein sequence, read N- to C-terminus: Succinate--CoA ligase [ADP-forming] subunit beta (385 aa).

Positions 9-243 constitute an ATP-grasp domain; sequence KEILSAYGIP…YSQLDTLEIN (235 aa). ATP contacts are provided by residues lysine 45, 52–54, glutamate 98, valine 101, and glutamate 106; that span reads GRG. Residues asparagine 198 and aspartate 212 each contribute to the Mg(2+) site. Residues asparagine 263 and 320-322 each bind substrate; that span reads GIM.

The protein belongs to the succinate/malate CoA ligase beta subunit family. As to quaternary structure, heterotetramer of two alpha and two beta subunits. It depends on Mg(2+) as a cofactor.

The enzyme catalyses succinate + ATP + CoA = succinyl-CoA + ADP + phosphate. It catalyses the reaction GTP + succinate + CoA = succinyl-CoA + GDP + phosphate. It participates in carbohydrate metabolism; tricarboxylic acid cycle; succinate from succinyl-CoA (ligase route): step 1/1. Succinyl-CoA synthetase functions in the citric acid cycle (TCA), coupling the hydrolysis of succinyl-CoA to the synthesis of either ATP or GTP and thus represents the only step of substrate-level phosphorylation in the TCA. The beta subunit provides nucleotide specificity of the enzyme and binds the substrate succinate, while the binding sites for coenzyme A and phosphate are found in the alpha subunit. The chain is Succinate--CoA ligase [ADP-forming] subunit beta from Geobacter sulfurreducens (strain ATCC 51573 / DSM 12127 / PCA).